Reading from the N-terminus, the 166-residue chain is UPF0254 protein Maeo_0668 (166 aa).

It belongs to the UPF0254 family.

The protein is UPF0254 protein Maeo_0668 of Methanococcus aeolicus (strain ATCC BAA-1280 / DSM 17508 / OCM 812 / Nankai-3).